The sequence spans 248 residues: Type III pantothenate kinase (248 aa).

6 to 13 (DCGNSFIK) is a binding site for ATP. Substrate is bound by residues Tyr92 and 99-102 (GLDR). The active-site Proton acceptor is the Asp101. Asp121 contacts K(+). An ATP-binding site is contributed by Thr124. Thr180 is a binding site for substrate.

It belongs to the type III pantothenate kinase family. As to quaternary structure, homodimer. Requires NH4(+) as cofactor. K(+) is required as a cofactor.

It is found in the cytoplasm. It catalyses the reaction (R)-pantothenate + ATP = (R)-4'-phosphopantothenate + ADP + H(+). The protein operates within cofactor biosynthesis; coenzyme A biosynthesis; CoA from (R)-pantothenate: step 1/5. In terms of biological role, catalyzes the phosphorylation of pantothenate (Pan), the first step in CoA biosynthesis. The polypeptide is Type III pantothenate kinase (Ectopseudomonas mendocina (strain ymp) (Pseudomonas mendocina)).